Consider the following 1183-residue polypeptide: SRC kinase signaling inhibitor 1 (1183 aa).

The segment at Met-1–Phe-44 is disordered. Residues Ser-13 and Ser-18 each carry the phosphoserine modification. Gly residues predominate over residues Leu-31 to Gly-41. At Ser-45 the chain carries Phosphoserine. Thr-52 bears the Phosphothreonine mark. Phosphoserine is present on residues Ser-53, Ser-64, Ser-143, Ser-165, Ser-169, Ser-179, and Ser-225. A Phosphotyrosine modification is found at Tyr-241. Residues Ala-284–Asp-379 form a disordered region. Over residues Arg-286 to Asn-296 the composition is skewed to polar residues. Over residues Leu-297 to Gly-306 the composition is skewed to low complexity. Ser-298, Ser-307, and Ser-324 each carry phosphoserine. The segment covering Pro-313–Ser-331 has biased composition (low complexity). 2 positions are modified to omega-N-methylarginine: Arg-329 and Arg-336. 3 positions are modified to phosphoserine: Ser-343, Ser-362, and Ser-364. Over residues Leu-369–Asp-379 the composition is skewed to basic and acidic residues. Tyr-396 is subject to Phosphotyrosine. Residues Tyr-466–Thr-643 form a disordered region. The span at Pro-485–Gly-497 shows a compositional bias: pro residues. Ser-493, Ser-496, and Ser-500 each carry phosphoserine. At Arg-501 the chain carries Omega-N-methylarginine. Residues Ser-503, Ser-513, Ser-515, Ser-517, and Ser-522 each carry the phosphoserine modification. Residues Gly-524–Ser-541 are compositionally biased toward low complexity. Over residues Lys-562–Glu-574 the composition is skewed to basic and acidic residues. Residues Ser-598 and Ser-621 each carry the phosphoserine modification. Phosphothreonine occurs at positions 624 and 637. Over residues Ala-634 to Thr-643 the composition is skewed to low complexity. The interval Arg-647 to Val-697 is interaction with SNAP25. Coiled coils occupy residues Leu-654–Leu-674 and Glu-726–Asp-746. Phosphoserine occurs at positions 844, 857, and 866. Disordered stretches follow at residues Glu-861–Ser-907 and Asp-949–Lys-1032. Thr-884 carries the phosphothreonine modification. At Ser-987 the chain carries Phosphoserine. Residues Lys-1002–Arg-1011 are compositionally biased toward pro residues. 2 positions are modified to phosphoserine: Ser-1043 and Ser-1060. Disordered stretches follow at residues Ala-1058–Asp-1081 and Gly-1105–Phe-1183. Polar residues predominate over residues Gln-1135–Phe-1183.

This sequence belongs to the SRCIN1 family. In terms of assembly, interacts with the N-terminal coiled-coil region of SNAP25. Interacts with BCAR1/p130Cas and SRC through its C-terminal domain. Interacts with CSK, CTTN, SORBS3/vinexin, SYP and MAPRE3/EB3. Tyrosine-phosphorylated in response to EGF and to cell adhesion to integrin ligands. Expressed in some primary breast carcinomas where its presence is significantly associated with increased tumor size. Not detected in normal breast tissue.

Its subcellular location is the cytoplasm. The protein localises to the cytoskeleton. It localises to the cell projection. It is found in the axon. The protein resides in the dendrite. Its subcellular location is the presynapse. The protein localises to the postsynapse. It localises to the postsynaptic density. In terms of biological role, acts as a negative regulator of SRC by activating CSK which inhibits SRC activity and downstream signaling, leading to impaired cell spreading and migration. Regulates dendritic spine morphology. Involved in calcium-dependent exocytosis. May play a role in neurotransmitter release or synapse maintenance. The polypeptide is SRC kinase signaling inhibitor 1 (Homo sapiens (Human)).